We begin with the raw amino-acid sequence, 77 residues long: Large ribosomal subunit protein eL20 (77 aa).

This sequence belongs to the eukaryotic ribosomal protein eL20 family. In terms of assembly, part of the 50S ribosomal subunit. Binds 23S rRNA.

The polypeptide is Large ribosomal subunit protein eL20 (Pyrococcus furiosus (strain ATCC 43587 / DSM 3638 / JCM 8422 / Vc1)).